The following is a 500-amino-acid chain: Pentatricopeptide repeat-containing protein At1g05750, chloroplastic (500 aa).

The transit peptide at 1–54 (MGLLPVVGITSPALITHKNHANPKIQRHNQSTSETTVSWTSRINLLTRNGRLAE) directs the protein to the chloroplast. PPR repeat units lie at residues 35-69 (TTVS…GVEP), 70-106 (NHIT…GLDR), 108-138 (HVMV…MEDK), 139-173 (NSVT…DLIS), 174-204 (WTAM…GVKP), 205-239 (DYVA…DFKN), 240-270 (NVRV…MEKR), 271-305 (TVVS…GFKP), 306-336 (DAVT…MKCD), and 342-376 (RIEH…PNEV). The interval 377–453 (VIGSLLAACS…QPGFSSIEID (77 aa)) is type E motif. A type E(+) motif region spans residues 454 to 484 (DCMHVFMAGDNAHVETTYIREVLELISSDLR).

The protein belongs to the PPR family. PCMP-E subfamily.

The protein localises to the plastid. It is found in the chloroplast. The polypeptide is Pentatricopeptide repeat-containing protein At1g05750, chloroplastic (PDE247) (Arabidopsis thaliana (Mouse-ear cress)).